We begin with the raw amino-acid sequence, 553 residues long: Methionine--tRNA ligase (553 aa).

Positions 12–22 (PYANSQLHLGH) match the 'HIGH' region motif. Residues Cys-144, Cys-147, Cys-157, and Cys-160 each contribute to the Zn(2+) site. The 'KMSKS' region motif lies at 332 to 336 (KFSKS). Lys-335 serves as a coordination point for ATP.

It belongs to the class-I aminoacyl-tRNA synthetase family. MetG type 1 subfamily. As to quaternary structure, monomer. The cofactor is Zn(2+).

Its subcellular location is the cytoplasm. The enzyme catalyses tRNA(Met) + L-methionine + ATP = L-methionyl-tRNA(Met) + AMP + diphosphate. In terms of biological role, is required not only for elongation of protein synthesis but also for the initiation of all mRNA translation through initiator tRNA(fMet) aminoacylation. This Dehalococcoides mccartyi (strain ATCC BAA-2266 / KCTC 15142 / 195) (Dehalococcoides ethenogenes (strain 195)) protein is Methionine--tRNA ligase.